A 241-amino-acid polypeptide reads, in one-letter code: Protocatechuate 3,4-dioxygenase beta chain (241 aa).

Fe cation contacts are provided by tyrosine 109, tyrosine 148, histidine 161, and histidine 163.

Belongs to the intradiol ring-cleavage dioxygenase family. The enzyme is an oligomer of 12 copies of the alpha and beta chains. Fe(3+) serves as cofactor.

It carries out the reaction 3,4-dihydroxybenzoate + O2 = 3-carboxy-cis,cis-muconate + 2 H(+). It functions in the pathway aromatic compound metabolism; beta-ketoadipate pathway; 3-carboxy-cis,cis-muconate from 3,4-dihydroxybenzoate: step 1/1. In terms of biological role, plays an essential role in the utilization of numerous aromatic and hydroaromatic compounds via the beta-ketoadipate pathway. The sequence is that of Protocatechuate 3,4-dioxygenase beta chain (pcaH) from Acinetobacter baylyi (strain ATCC 33305 / BD413 / ADP1).